Reading from the N-terminus, the 214-residue chain is MNNLKRFTESIFSCIALSTLLFLGGCQTLPPADDLTPITVSHPDQAKAWELQGKLAIKTPEDKLSANLYWRHSEERDELTLTTMLGTTVLTLEATPNSAHLHIDGKDFKDNNAQDLLERVSGWSIPLADLPLWITGQIGSQDRVLSRDSKANPKQLINDQTPPSWVVEFLSWQLQSGAHIPHQLKLERGDLQLKLQINQWQALGKATIMIGEKP.

The N-terminal stretch at 1 to 25 is a signal peptide; sequence MNNLKRFTESIFSCIALSTLLFLGG. The N-palmitoyl cysteine moiety is linked to residue C26. C26 carries the S-diacylglycerol cysteine lipid modification.

This sequence belongs to the LolB family. Monomer.

Its subcellular location is the cell outer membrane. Functionally, plays a critical role in the incorporation of lipoproteins in the outer membrane after they are released by the LolA protein. This chain is Outer-membrane lipoprotein LolB, found in Shewanella putrefaciens (strain CN-32 / ATCC BAA-453).